Here is a 198-residue protein sequence, read N- to C-terminus: Recombination protein RecR (198 aa).

The C4-type zinc finger occupies 56-71 (CDTCGNVDTQNPCGIC). Residues 79–174 (KSICVVEDVA…RITQLAHGLP (96 aa)) enclose the Toprim domain.

It belongs to the RecR family.

In terms of biological role, may play a role in DNA repair. It seems to be involved in an RecBC-independent recombinational process of DNA repair. It may act with RecF and RecO. The sequence is that of Recombination protein RecR from Erythrobacter litoralis (strain HTCC2594).